A 250-amino-acid chain; its full sequence is Virulence plasmid protein pGP6-D-related protein (250 aa).

Belongs to the UPF0137 (pGP6-D) family.

The sequence is that of Virulence plasmid protein pGP6-D-related protein from Chlamydia pneumoniae (Chlamydophila pneumoniae).